A 525-amino-acid polypeptide reads, in one-letter code: MTVLTDFLATHQLLTILIVLASGALLGQIKFGPLRFGAAGALFMGLVVGALDPRFGQNLGMIKGLGVVLFCYTVGLAAGSTFLSDLKRQWGLMLAGVVGLAVMAAAGLGLGRLFGLTPAHVAGLYAGVLTSPAIDAASMATHGAADTLVGYALSYPVGVVVGLIMVAIIAKRCWPASKDNTSMAEAGLTAVSTVVDRETSIRQTPGFNDDQVRMSYLLRDGEMRLATPDDDLHVGDQVLVVGNPDDVNRAVEHLGHVSERTLTNERNELDFRRFVVSNPALVGRTLGSIDVRGRTSGKVTRVRRGDLDMLARSDIVLQPGDRVLCVVPAHRLSDAADLFGDSEARVSQVDALSLGLGAALGLLLGALMVALPRGLQFELGTAAGPLVMGMILGSIHRTGPLRWQLPHATNAILRQLGLMIFLACVGLASGPAFLSQAVSGTGLAVIAVSAVTLVLGGAIVIAAAWCMKLSAQRATGAFAGFVGQPAILSYANSLVNDERIESAYGALFALGTVVKILLVQVIVLV.

6 helical membrane-spanning segments follow: residues 7 to 29 (FLAT…LGQI), 34 to 51 (LRFG…VGAL), 64 to 82 (GLGV…GSTF), 92 to 114 (LMLA…GRLF), 121 to 143 (VAGL…ATHG), and 148 to 170 (LVGY…AIIA). 2 consecutive RCK C-terminal domains span residues 178–257 (KDNT…LGHV) and 259–341 (ERTL…LFGD). The next 5 helical transmembrane spans lie at 351–370 (ALSL…LMVA), 374–396 (GLQF…GSIH), 416–438 (LGLM…SQAV), 443–465 (LAVI…AAAW), and 502–524 (SAYG…VIVL).

The protein belongs to the AAE transporter (TC 2.A.81) family.

It is found in the cell membrane. This is an uncharacterized protein from Cutibacterium acnes (strain DSM 16379 / KPA171202) (Propionibacterium acnes).